The following is a 61-amino-acid chain: MARKSLCVKAQRTPKFKVRTYNRCPLCGRPRGYMRKFGICRICFRNMASEGLLPGVIKSSW.

4 residues coordinate Zn(2+): cysteine 24, cysteine 27, cysteine 40, and cysteine 43.

The protein belongs to the universal ribosomal protein uS14 family. Zinc-binding uS14 subfamily. In terms of assembly, part of the 30S ribosomal subunit. Contacts proteins S3 and S10. It depends on Zn(2+) as a cofactor.

Binds 16S rRNA, required for the assembly of 30S particles and may also be responsible for determining the conformation of the 16S rRNA at the A site. This chain is Small ribosomal subunit protein uS14, found in Desulfatibacillum aliphaticivorans.